The following is a 463-amino-acid chain: Hexose-6-phosphate:phosphate antiporter (463 aa).

Residues 1-24 (MLAFLNQVRKPTLDLPLEVRRKMW) are Cytoplasmic-facing. Residues 25 to 45 (FKPFMQSYLVVFIGYLTMYLI) form a helical membrane-spanning segment. The Periplasmic portion of the chain corresponds to 46–60 (RKNFNIAQNDMISTY). A helical membrane pass occupies residues 61 to 81 (GLSMTQLGMIGLGFSITYGVG). Over 82 to 96 (KTLVSYYADGKNTKQ) the chain is Cytoplasmic. The chain crosses the membrane as a helical span at residues 97-117 (FLPFMLILSAICMLGFSASMG). Topologically, residues 118 to 120 (SGS) are periplasmic. The chain crosses the membrane as a helical span at residues 121–141 (VSLFLMIAFYALSGFFQSTGG). Residues 142–159 (SCSYSTITKWTPRRKRGT) are Cytoplasmic-facing. The chain crosses the membrane as a helical span at residues 160–180 (FLGFWNISHNLGGAGAAGVAL). Residues 181-189 (FGANYLFDG) are Periplasmic-facing. Residues 190 to 210 (HVIGMFIFPSIIALIVGFIGL) traverse the membrane as a helical segment. The Cytoplasmic portion of the chain corresponds to 211–259 (RYGSDSPESYGLGKAEELFGEEISEEDKETESTDMTKWQIFVEYVLKNK). A helical membrane pass occupies residues 260 to 280 (VIWLLCFANIFLYVVRIGIDQ). Residues 281 to 297 (WSTVYAFQELKLSKAVA) are Periplasmic-facing. The chain crosses the membrane as a helical span at residues 298-318 (IQGFTLFEAGALVGTLLWGWL). Residues 319 to 326 (SDLANGRR) are Cytoplasmic-facing. Residues 327 to 347 (GLVACIALALIIATLGVYQHA) form a helical membrane-spanning segment. At 348 to 357 (SNEYIYLASL) the chain is on the periplasmic side. The chain crosses the membrane as a helical span at residues 358–378 (FALGFLVFGPQLLIGVAAVGF). Residues 379–382 (VPKK) lie on the Cytoplasmic side of the membrane. The chain crosses the membrane as a helical span at residues 383–403 (AIGAADGIKGTFAYLIGDSFA). Topologically, residues 404-425 (KLGLGMIADGTPVFGLTGWAGT) are periplasmic. The chain crosses the membrane as a helical span at residues 426 to 446 (FAALDIAAIGCICLMAIVAVM). The Cytoplasmic portion of the chain corresponds to 447–463 (EERKIRREKKIQQLTVA).

This sequence belongs to the major facilitator superfamily. Organophosphate:Pi antiporter (OPA) (TC 2.A.1.4) family.

Its subcellular location is the cell inner membrane. Functionally, mediates the exchange of external hexose 6-phosphate and internal inorganic phosphate. This is Hexose-6-phosphate:phosphate antiporter (uhpT) from Escherichia coli O157:H7.